The following is an 835-amino-acid chain: Leucine--tRNA ligase (835 aa).

The short motif at 36–46 is the 'HIGH' region element; the sequence is PYPSGKIHVGH. A 'KMSKS' region motif is present at residues 602-606; the sequence is KMSKS. Lys-605 contacts ATP.

It belongs to the class-I aminoacyl-tRNA synthetase family.

It localises to the cytoplasm. It catalyses the reaction tRNA(Leu) + L-leucine + ATP = L-leucyl-tRNA(Leu) + AMP + diphosphate. In Rickettsia conorii (strain ATCC VR-613 / Malish 7), this protein is Leucine--tRNA ligase.